Here is a 308-residue protein sequence, read N- to C-terminus: Heme A synthase (308 aa).

Residues 1–8 lie on the Cytoplasmic side of the membrane; the sequence is MFKKRNLK. A helical transmembrane segment spans residues 9 to 29; sequence WLSILATVIMAWVQLGGALVT. Over 30–67 the chain is Extracellular; that stretch reads KTGSENGCGASWPLCHGALLPQNLPIATIIELSHRATS. A disulfide bridge links Cys37 with Cys44. Glu60 is an active-site residue. Residue His63 coordinates heme o. The helical transmembrane segment at 68 to 88 threads the bilayer; sequence ALSLIVVLWLVITAWKNIGYI. At 89 to 93 the chain is on the cytoplasmic side; sequence KEVKP. The helical transmembrane segment at 94 to 114 threads the bilayer; that stretch reads LCIISVAFLLIQALVGAAAVL. Topologically, residues 115-123 are extracellular; that stretch reads WQQNDYVLA. Residues 124 to 144 traverse the membrane as a helical segment; that stretch reads LHFGISLISFSSVFVLTLIIF. His125 contributes to the heme o binding site. Residues 145-161 lie on the Cytoplasmic side of the membrane; the sequence is DVDQKYEANKVHIDRKL. The helical transmembrane segment at 162–182 threads the bilayer; it reads RIYTWTMAICLYVGIYTGALV. At 183–215 the chain is on the extracellular side; it reads RHTKSSLAYGSWPLPFNDLIPHTEQDWVQLAHR. Residue His214 participates in heme b binding. Residues 216-236 traverse the membrane as a helical segment; that stretch reads TLALIASISVFLAFNYAIKHY. The Cytoplasmic portion of the chain corresponds to 237 to 244; it reads QNNRTIRY. Residues 245–265 form a helical membrane-spanning segment; that stretch reads GYTAALLLIILQIVTGALSIF. The Extracellular portion of the chain corresponds to 266–270; sequence THVNL. Residues 271-291 form a helical membrane-spanning segment; sequence IIALLHALIITFEFGLIAYLI. His276 provides a ligand contact to heme b. At 292-308 the chain is on the cytoplasmic side; that stretch reads VLLLRSQRVEKVKQNAY.

Belongs to the COX15/CtaA family. Type 1 subfamily. Interacts with CtaB. Heme b serves as cofactor.

The protein resides in the cell membrane. The catalysed reaction is Fe(II)-heme o + 2 A + H2O = Fe(II)-heme a + 2 AH2. The protein operates within porphyrin-containing compound metabolism; heme A biosynthesis; heme A from heme O: step 1/1. Its function is as follows. Catalyzes the conversion of heme O to heme A by two successive hydroxylations of the methyl group at C8. The first hydroxylation forms heme I, the second hydroxylation results in an unstable dihydroxymethyl group, which spontaneously dehydrates, resulting in the formyl group of heme A. This Staphylococcus carnosus (strain TM300) protein is Heme A synthase.